The chain runs to 158 residues: MSYTVIYAGTFDPMTNGHLDIIERASELFGQVIVAVAKNPSKQPLFSFEERTALVRQSCAHLANVQAVGFSGLLADFAKQHQAKALVRGIRGSDDIEYEIQLAQLNDKLSGRLDTVFLPPSVTWRYLSSTMVREIYRHQGDVAQFVPNAVLCALKEKE.

Thr10 is a binding site for substrate. ATP is bound by residues 10 to 11 (TF) and His18. Substrate contacts are provided by Lys42, Leu74, and Arg88. ATP contacts are provided by residues 89–91 (GIR), Glu99, and 124–130 (WRYLSST).

Belongs to the bacterial CoaD family. Homohexamer. It depends on Mg(2+) as a cofactor.

It is found in the cytoplasm. It catalyses the reaction (R)-4'-phosphopantetheine + ATP + H(+) = 3'-dephospho-CoA + diphosphate. It participates in cofactor biosynthesis; coenzyme A biosynthesis; CoA from (R)-pantothenate: step 4/5. In terms of biological role, reversibly transfers an adenylyl group from ATP to 4'-phosphopantetheine, yielding dephospho-CoA (dPCoA) and pyrophosphate. This Actinobacillus pleuropneumoniae serotype 5b (strain L20) protein is Phosphopantetheine adenylyltransferase.